The chain runs to 306 residues: Tryptophan 2,3-dioxygenase (306 aa).

Residues 75 to 79, Tyr-137, and Arg-141 each bind substrate; that span reads FIIQH. His-264 serves as a coordination point for heme. Thr-278 contacts substrate.

The protein belongs to the tryptophan 2,3-dioxygenase family. As to quaternary structure, homotetramer. Heme is required as a cofactor.

The catalysed reaction is L-tryptophan + O2 = N-formyl-L-kynurenine. It functions in the pathway amino-acid degradation; L-tryptophan degradation via kynurenine pathway; L-kynurenine from L-tryptophan: step 1/2. Heme-dependent dioxygenase that catalyzes the oxidative cleavage of the L-tryptophan (L-Trp) pyrrole ring and converts L-tryptophan to N-formyl-L-kynurenine. Catalyzes the oxidative cleavage of the indole moiety. This Paraburkholderia phytofirmans (strain DSM 17436 / LMG 22146 / PsJN) (Burkholderia phytofirmans) protein is Tryptophan 2,3-dioxygenase.